The chain runs to 314 residues: Carbamate kinase (314 aa).

Belongs to the carbamate kinase family.

Its subcellular location is the cytoplasm. It catalyses the reaction hydrogencarbonate + NH4(+) + ATP = carbamoyl phosphate + ADP + H2O + H(+). It participates in metabolic intermediate metabolism; carbamoyl phosphate degradation; CO(2) and NH(3) from carbamoyl phosphate: step 1/1. This Latilactobacillus sakei (Lactobacillus sakei) protein is Carbamate kinase (arcC).